A 181-amino-acid polypeptide reads, in one-letter code: TATA-box-binding protein C (181 aa).

Repeat copies occupy residues 5 to 83 (IANI…LGML) and 99 to 177 (VENV…QSKV).

This sequence belongs to the TBP family.

Functionally, general factor that plays a role in the activation of archaeal genes transcribed by RNA polymerase. Binds specifically to the TATA box promoter element which lies close to the position of transcription initiation. In Halobacterium salinarum (strain ATCC 700922 / JCM 11081 / NRC-1) (Halobacterium halobium), this protein is TATA-box-binding protein C (tbpC1).